The primary structure comprises 166 residues: UPF0336 protein ML1908 (166 aa).

Belongs to the UPF0336 family.

In Mycobacterium leprae (strain TN), this protein is UPF0336 protein ML1908.